The primary structure comprises 83 residues: Evasin P1124 (83 aa).

An N-terminal signal peptide occupies residues 1 to 28 (MAVNVFTILQLAVFAAIVLNVNLHSVSA). 3 cysteine pairs are disulfide-bonded: Cys-48/Cys-66, Cys-52/Cys-68, and Cys-62/Cys-79. An N-linked (GlcNAc...) asparagine glycan is attached at Asn-51.

It localises to the secreted. In terms of biological role, salivary chemokine-binding protein which binds to host chemokines CXCL1, CXCL2, CXCL3, CXCL5, CXCL6, CXCL12 and CXCL13. This Ixodes ricinus (Common tick) protein is Evasin P1124.